The chain runs to 602 residues: Chaperone protein dnaK (602 aa).

It belongs to the heat shock protein 70 family.

The protein resides in the plastid. It is found in the chloroplast. In terms of biological role, acts as a chaperone. The chain is Chaperone protein dnaK from Thalassiosira pseudonana (Marine diatom).